Reading from the N-terminus, the 1071-residue chain is Carbamoyl phosphate synthase pyrimidine-specific large chain (1071 aa).

A carboxyphosphate synthetic domain region spans residues 1–401 (MPKRVDINKI…SLLKAVRSLE (401 aa)). Arginine 129, arginine 169, glycine 175, glycine 176, lysine 208, isoleucine 210, glutamate 215, glycine 241, isoleucine 242, histidine 243, glutamine 284, and glutamate 298 together coordinate ATP. Positions 133 to 327 (RTLMNELNEP…IAKLAAKIAV (195 aa)) constitute an ATP-grasp 1 domain. The Mg(2+) site is built by glutamine 284, glutamate 298, and asparagine 300. Positions 284, 298, and 300 each coordinate Mn(2+). The oligomerization domain stretch occupies residues 402–546 (ADVYHLELKD…YSTYEEENES (145 aa)). Positions 547–929 (VVTDKKSVMV…ALYKALIASG (383 aa)) are carbamoyl phosphate synthetic domain. The region spanning 671–861 (EQALGELGVP…MANLATKIIL (191 aa)) is the ATP-grasp 2 domain. Residues arginine 707, arginine 746, leucine 748, glutamate 752, glycine 777, valine 778, histidine 779, serine 780, glutamine 820, and glutamate 832 each coordinate ATP. 3 residues coordinate Mg(2+): glutamine 820, glutamate 832, and asparagine 834. Residues glutamine 820, glutamate 832, and asparagine 834 each contribute to the Mn(2+) site. Residues 930–1071 (IQIPNYGSVL…NTNQEAAVTI (142 aa)) enclose the MGS-like domain. Residues 930 to 1071 (IQIPNYGSVL…NTNQEAAVTI (142 aa)) form an allosteric domain region.

This sequence belongs to the CarB family. Composed of two chains; the small (or glutamine) chain promotes the hydrolysis of glutamine to ammonia, which is used by the large (or ammonia) chain to synthesize carbamoyl phosphate. Tetramer of heterodimers (alpha,beta)4. Interacts with BrxC. It depends on Mg(2+) as a cofactor. Requires Mn(2+) as cofactor.

It carries out the reaction hydrogencarbonate + L-glutamine + 2 ATP + H2O = carbamoyl phosphate + L-glutamate + 2 ADP + phosphate + 2 H(+). The enzyme catalyses hydrogencarbonate + NH4(+) + 2 ATP = carbamoyl phosphate + 2 ADP + phosphate + 2 H(+). The protein operates within amino-acid biosynthesis; L-arginine biosynthesis; carbamoyl phosphate from bicarbonate: step 1/1. It functions in the pathway pyrimidine metabolism; UMP biosynthesis via de novo pathway; (S)-dihydroorotate from bicarbonate: step 1/3. Small subunit of the glutamine-dependent carbamoyl phosphate synthetase (CPSase). CPSase catalyzes the formation of carbamoyl phosphate from the ammonia moiety of glutamine, carbonate, and phosphate donated by ATP, constituting the first step of the biosynthetic pathway leading to pyrimidine nucleotides. The large subunit (synthetase) binds the substrates ammonia (free or transferred from glutamine from the small subunit), hydrogencarbonate and ATP and carries out an ATP-coupled ligase reaction, activating hydrogencarbonate by forming carboxy phosphate which reacts with ammonia to form carbamoyl phosphate. The sequence is that of Carbamoyl phosphate synthase pyrimidine-specific large chain (pyrAB) from Bacillus subtilis (strain 168).